We begin with the raw amino-acid sequence, 309 residues long: MDEKVFTKELDQWIEQLNECKQLSESQVKSLCEKAKEILTKESNVQEVRCPVTVCGDVHGQFHDLMELFRIGGKSPDTNYLFMGDYVDRGYYSVETVTLLVALKVRYRERITILRGNHESRQITQVYGFYDECLRKYGNANVWKYFTDLFDYLPLTALVDGQIFCLHGGLSPSIDTLDHIRALDRLQEVPHEGPMCDLLWSDPDDRGGWGISPRGAGYTFGQDISETFNHANGLTLVSRAHQLVMEGYNWCHDRNVVTIFSAPNYCYRCGNQAAIMELDDTLKYSFLQFDPAPRRGEPHVTRRTPDYFL.

Residues Asp57, His59, Asp85, and Asn117 each coordinate Mn(2+). Residues Asp57, His59, and Asp85 each contribute to the Zn(2+) site. Positions 85 and 117 each coordinate Fe(3+). Catalysis depends on His118, which acts as the Proton donor. Mn(2+) contacts are provided by His167 and His241. Residues His167 and His241 each contribute to the Fe(3+) site. Position 307 is a phosphotyrosine (Tyr307). A Leucine methyl ester modification is found at Leu309.

It belongs to the PPP phosphatase family. PP-1 subfamily. As to quaternary structure, PP2A consists of a common heterodimeric core enzyme composed of PPP2CA, a 36 kDa catalytic subunit (subunit C), and PPP2R1A, a 65 kDa constant regulatory subunit (PR65 or subunit A), that associates with a variety of regulatory subunits. Proteins that associate with the core dimer include three families of regulatory subunits B (the R2/B/PR55/B55, R3/B''/PR72/PR130/PR59 and R5/B'/B56 families), the 48 kDa variable regulatory subunit, viral proteins, and cell signaling molecules. Interacts with the PP2A A subunit PPP2R1A. Interacts with the regulatory subunit PPP2R2A. Interacts (via C-terminus) with PTPA. Interacts with NXN; the interaction is direct. Interacts with KCTD20. Interacts with BTBD10. Interacts with SGO1 and SGO2. Interacts with RAF1. Interaction with IGBP1 protects unassembled PPP2CA from degradative ubiquitination. Interacts with GSK3B (via C2 domain). Interacts with MFHAS1; retains PPP2CA into the cytoplasm and excludes it from the nucleus. Interacts with PABIR1/FAM122A. Interacts with ADCY8; interaction is phosphatase activity-dependent; antagonizes interaction between ADCY8 and calmodulin. Interacts with CRTC3 (when phosphorylated at 'Ser-391'). Interacts with SPRY2; the interaction is inhibited by TESK1 interaction with SPRY2, possibly by vesicular sequestration of SPRY2. Interacts with TRAF3IP3. Interacts with AMBRA1 (via PxP motifs); enhancing interaction between PPP2CA and MYC or FOXO3. Forms a complex with AMBRA1 and BECN1; AMBRA1 and BECN1 components of the complex regulate MYC stability via different pathways. Part of the core of STRIPAK complexes composed of PP2A catalytic and scaffolding subunits, the striatins (PP2A regulatory subunits), the striatin-associated proteins MOB4, STRIP1 and STRIP2, PDCD10 and members of the STE20 kinases, such as STK24 and STK26. Phosphatase component of the Integrator-PP2A (INTAC) complex, composed of the Integrator core complex and protein phosphatase 2A subunits PPP2CA and PPP2R1A. It depends on Mn(2+) as a cofactor. Requires Fe(3+) as cofactor. Zn(2+) serves as cofactor. Reversibly methyl esterified on Leu-309 by leucine carboxyl methyltransferase 1 (LCMT1) and protein phosphatase methylesterase 1 (PPME1). Carboxyl methylation influences the affinity of the catalytic subunit for the different regulatory subunits, thereby modulating the PP2A holoenzyme's substrate specificity, enzyme activity and cellular localization. In terms of processing, phosphorylation of either threonine (by autophosphorylation-activated protein kinase) or tyrosine results in inactivation of the phosphatase. Auto-dephosphorylation has been suggested as a mechanism for reactivation. Post-translationally, polyubiquitinated, leading to its degradation by the proteasome.

The protein localises to the cytoplasm. It localises to the nucleus. The protein resides in the chromosome. Its subcellular location is the centromere. It is found in the cytoskeleton. The protein localises to the spindle pole. It catalyses the reaction O-phospho-L-seryl-[protein] + H2O = L-seryl-[protein] + phosphate. It carries out the reaction O-phospho-L-threonyl-[protein] + H2O = L-threonyl-[protein] + phosphate. Inhibited by the interaction between PPP2R2A and ARPP19; this inhibition is enhanced when ARPP19 is phosphorylated. Inhibited by the interaction between PPP2R2A and PABIR1/FAM122A. Its function is as follows. Catalytic subunit of protein phosphatase 2A (PP2A), a serine/threonine phosphatase involved in the regulation of a wide variety of enzymes, signal transduction pathways, and cellular events. PP2A is the major phosphatase for microtubule-associated proteins (MAPs). PP2A can modulate the activity of phosphorylase B kinase casein kinase 2, mitogen-stimulated S6 kinase, and MAP-2 kinase. Cooperates with SGO2 to protect centromeric cohesin from separase-mediated cleavage in oocytes specifically during meiosis I. Can dephosphorylate various proteins, such as SV40 large T antigen, AXIN1, p53/TP53, PIM3, WEE1. Activates RAF1 by dephosphorylating it at 'Ser-259'. Mediates dephosphorylation of WEE1, preventing its ubiquitin-mediated proteolysis, increasing WEE1 protein levels, and promoting the G2/M checkpoint. Mediates dephosphorylation of MYC; promoting its ubiquitin-mediated proteolysis: interaction with AMBRA1 enhances interaction between PPP2CA and MYC. Mediates dephosphorylation of FOXO3; promoting its stabilization: interaction with AMBRA1 enhances interaction between PPP2CA and FOXO3. Catalyzes dephosphorylation of the pyrin domain of NLRP3, promoting assembly of the NLRP3 inflammasome. Together with RACK1 adapter, mediates dephosphorylation of AKT1 at 'Ser-473', preventing AKT1 activation and AKT-mTOR signaling pathway. Dephosphorylation of AKT1 is essential for regulatory T-cells (Treg) homeostasis and stability. Catalyzes dephosphorylation of PIM3, promotinh PIM3 ubiquitination and proteasomal degradation. Part of the striatin-interacting phosphatase and kinase (STRIPAK) complexes. STRIPAK complexes have critical roles in protein (de)phosphorylation and are regulators of multiple signaling pathways including Hippo, MAPK, nuclear receptor and cytoskeleton remodeling. Different types of STRIPAK complexes are involved in a variety of biological processes such as cell growth, differentiation, apoptosis, metabolism and immune regulation. Key mediator of a quality checkpoint during transcription elongation as part of the Integrator-PP2A (INTAC) complex. The INTAC complex drives premature transcription termination of transcripts that are unfavorably configured for transcriptional elongation: within the INTAC complex, PPP2CA catalyzes dephosphorylation of the C-terminal domain (CTD) of Pol II subunit POLR2A/RPB1 and SUPT5H/SPT5, thereby preventing transcriptional elongation. The polypeptide is Serine/threonine-protein phosphatase 2A catalytic subunit alpha isoform (PPP2CA) (Homo sapiens (Human)).